The following is a 95-amino-acid chain: Aspartyl/glutamyl-tRNA(Asn/Gln) amidotransferase subunit C (95 aa).

This sequence belongs to the GatC family. Heterotrimer of A, B and C subunits.

It catalyses the reaction L-glutamyl-tRNA(Gln) + L-glutamine + ATP + H2O = L-glutaminyl-tRNA(Gln) + L-glutamate + ADP + phosphate + H(+). The catalysed reaction is L-aspartyl-tRNA(Asn) + L-glutamine + ATP + H2O = L-asparaginyl-tRNA(Asn) + L-glutamate + ADP + phosphate + 2 H(+). Its function is as follows. Allows the formation of correctly charged Asn-tRNA(Asn) or Gln-tRNA(Gln) through the transamidation of misacylated Asp-tRNA(Asn) or Glu-tRNA(Gln) in organisms which lack either or both of asparaginyl-tRNA or glutaminyl-tRNA synthetases. The reaction takes place in the presence of glutamine and ATP through an activated phospho-Asp-tRNA(Asn) or phospho-Glu-tRNA(Gln). This Pseudomonas fluorescens (strain ATCC BAA-477 / NRRL B-23932 / Pf-5) protein is Aspartyl/glutamyl-tRNA(Asn/Gln) amidotransferase subunit C.